Here is a 208-residue protein sequence, read N- to C-terminus: MTRVALLTTGRELSQAAPPARARTPLPVPTPRGERPDDGGHAPHRDRRVNQRRRQVGDRRAQRGVDEHPWRRPDERPNDHLPQRNSERPEGVRGQRIRDAGDEALTDHRPQSAPFDLCIEAMGAIDTQQRLGVIPACAPAEKAGRVTKVSSSGPNSTPLPAARIGPGTNNAPSAADTTTYARGAIGPVATTIALRTPSTWMTRATATR.

Residues 1–16 (MTRVALLTTGRELSQA) form the signal peptide. Disordered stretches follow at residues 1-95 (MTRV…VRGQ) and 145-176 (RVTK…SAAD). A compositionally biased stretch (low complexity) spans 16-25 (AAPPARARTP). The span at 32–43 (RGERPDDGGHAP) shows a compositional bias: basic and acidic residues. Residues 44-54 (HRDRRVNQRRR) show a composition bias toward basic residues. The span at 55–95 (QVGDRRAQRGVDEHPWRRPDERPNDHLPQRNSERPEGVRGQ) shows a compositional bias: basic and acidic residues. Polar residues-rich tracts occupy residues 148–158 (KVSSSGPNSTP) and 167–176 (GTNNAPSAAD).

This is an uncharacterized protein from Mycobacterium tuberculosis (strain CDC 1551 / Oshkosh).